The sequence spans 163 residues: Nucleotide-binding protein syc0675_c (163 aa).

Belongs to the YajQ family.

In terms of biological role, nucleotide-binding protein. This is Nucleotide-binding protein syc0675_c from Synechococcus sp. (strain ATCC 27144 / PCC 6301 / SAUG 1402/1) (Anacystis nidulans).